Here is a 523-residue protein sequence, read N- to C-terminus: 2-isopropylmalate synthase (523 aa).

The Pyruvate carboxyltransferase domain occupies 5–267; that stretch reads VIIFDTTLRD…HTNINHHEIW (263 aa). The Mn(2+) site is built by Asp14, His202, His204, and Asn238. A regulatory domain region spans residues 392–523; that stretch reads RLDYFSVQSG…QNKENNKETV (132 aa).

Belongs to the alpha-IPM synthase/homocitrate synthase family. LeuA type 1 subfamily. As to quaternary structure, homodimer. Mn(2+) is required as a cofactor.

Its subcellular location is the cytoplasm. It carries out the reaction 3-methyl-2-oxobutanoate + acetyl-CoA + H2O = (2S)-2-isopropylmalate + CoA + H(+). It functions in the pathway amino-acid biosynthesis; L-leucine biosynthesis; L-leucine from 3-methyl-2-oxobutanoate: step 1/4. Its function is as follows. Catalyzes the condensation of the acetyl group of acetyl-CoA with 3-methyl-2-oxobutanoate (2-ketoisovalerate) to form 3-carboxy-3-hydroxy-4-methylpentanoate (2-isopropylmalate). The polypeptide is 2-isopropylmalate synthase (Salmonella dublin (strain CT_02021853)).